The sequence spans 325 residues: Glutarate 2-hydroxylase (325 aa).

The Fe cation site is built by His160, Asp162, and His292.

Belongs to the glutarate hydroxylase family. As to quaternary structure, homotetramer. The cofactor is Fe(2+).

It catalyses the reaction glutarate + 2-oxoglutarate + O2 = (S)-2-hydroxyglutarate + succinate + CO2. Its pathway is amino-acid degradation. In terms of biological role, acts as an alpha-ketoglutarate-dependent dioxygenase catalyzing hydroxylation of glutarate (GA) to L-2-hydroxyglutarate (L2HG). Functions in a L-lysine degradation pathway that proceeds via cadaverine, glutarate and L-2-hydroxyglutarate. This chain is Glutarate 2-hydroxylase, found in Pseudomonas putida (strain GB-1).